Reading from the N-terminus, the 83-residue chain is uncharacterized protein (83 aa).

This is an uncharacterized protein from Rickettsia conorii (strain ATCC VR-613 / Malish 7).